A 538-amino-acid polypeptide reads, in one-letter code: Ribosome-associated complex subunit SSZ1 (538 aa).

The segment at 400 to 538 is peptide-binding domain; sequence PVIVNTPHLK…KTGNAVKGEL (139 aa). The segment at 464-484 is disordered; sequence PIPKEENAEEDDESEWSDDEP. The segment covering 470-484 has biased composition (acidic residues); it reads NAEEDDESEWSDDEP. Phosphoserine is present on residues S477 and S480.

Belongs to the heat shock protein 70 family. In terms of assembly, RAC is a heterodimer of the Hsp70/DnaK-type chaperone SSZ1 and the Hsp40/DnaJ-type chaperone ZUO1. RAC associates with ribosomes via ZUO1.

The protein resides in the cytoplasm. Its function is as follows. Component of the ribosome-associated complex (RAC), a heterodimeric chaperone complex involved in regulation of accurate translation termination and in folding or maintaining nascent polypeptides in a folding-competent state. RAC stimulates the ATPase activity of the ribosome-associated pool of Hsp70-type chaperones SSB1/SSB2 that bind to the nascent polypeptide chain. SSZ1 is required for ZUO1 to function efficiently as a J-protein for SSB1/SSB2. Also involved in pleiotropic drug resistance by post-translational activation of transcription factor PDR1. The polypeptide is Ribosome-associated complex subunit SSZ1 (SSZ1) (Saccharomyces cerevisiae (strain ATCC 204508 / S288c) (Baker's yeast)).